The sequence spans 280 residues: L-proline cis-4-hydroxylase (280 aa).

Fe cation-binding residues include His-106, Asp-108, and His-154. A 2-oxoglutarate-binding site is contributed by Arg-164.

This sequence belongs to the L-proline cis-4-/cis-3-hydroxylase family. The cofactor is Fe(2+).

The enzyme catalyses L-proline + 2-oxoglutarate + O2 = cis-4-hydroxy-L-proline + succinate + CO2. Its activity is regulated as follows. Inhibited by metal ions such as Co(2+), Zn(2+), Cu(2+) or Ni(2+). Is also inhibited by EDTA or diethylpyrocarbonate (DEPC) in vitro. Unlike the procollagen-proline cis-3- and trans-4-hydroxylases from mammals, does not necessarily require L-ascorbate for activity although it does increase the activity of the enzyme. Its function is as follows. Dioxygenase that catalyzes the 2-oxoglutarate-dependent selective hydroxylation of free L-proline to cis-4-hydroxy-L-proline (cis-4-Hyp). The protein is L-proline cis-4-hydroxylase of Mesorhizobium japonicum (strain LMG 29417 / CECT 9101 / MAFF 303099) (Mesorhizobium loti (strain MAFF 303099)).